Here is a 200-residue protein sequence, read N- to C-terminus: Ubiquinol-cytochrome-c reductase complex assembly factor 1 (200 aa).

It belongs to the CBP3 family.

It is found in the mitochondrion inner membrane. Functionally, required for the assembly of the ubiquinol-cytochrome c reductase complex (mitochondrial respiratory chain complex III or cytochrome b-c1 complex). May be involved in cytochrome b translation and/or stability. This Xenopus laevis (African clawed frog) protein is Ubiquinol-cytochrome-c reductase complex assembly factor 1 (uqcc1).